Here is a 165-residue protein sequence, read N- to C-terminus: Protein SprT (165 aa).

Residues 22–163 enclose the SprT-like domain; it reads LAQANLKLGC…RCVHCGEQLV (142 aa). H78 provides a ligand contact to Zn(2+). The active site involves E79. H82 serves as a coordination point for Zn(2+).

The protein belongs to the SprT family. The cofactor is Zn(2+).

The protein localises to the cytoplasm. The polypeptide is Protein SprT (Shigella dysenteriae serotype 1 (strain Sd197)).